Here is a 118-residue protein sequence, read N- to C-terminus: Aspartate 1-decarboxylase (118 aa).

Ser-25 functions as the Schiff-base intermediate with substrate; via pyruvic acid in the catalytic mechanism. Ser-25 carries the pyruvic acid (Ser) modification. Thr-57 is a substrate binding site. Tyr-58 serves as the catalytic Proton donor. 73–75 lines the substrate pocket; sequence GAA.

The protein belongs to the PanD family. In terms of assembly, heterooctamer of four alpha and four beta subunits. Pyruvate serves as cofactor. Is synthesized initially as an inactive proenzyme, which is activated by self-cleavage at a specific serine bond to produce a beta-subunit with a hydroxyl group at its C-terminus and an alpha-subunit with a pyruvoyl group at its N-terminus.

It localises to the cytoplasm. The catalysed reaction is L-aspartate + H(+) = beta-alanine + CO2. Its pathway is cofactor biosynthesis; (R)-pantothenate biosynthesis; beta-alanine from L-aspartate: step 1/1. Its function is as follows. Catalyzes the pyruvoyl-dependent decarboxylation of aspartate to produce beta-alanine. The chain is Aspartate 1-decarboxylase from Caulobacter vibrioides (strain ATCC 19089 / CIP 103742 / CB 15) (Caulobacter crescentus).